Consider the following 415-residue polypeptide: WD repeat-containing protein JIP5 (415 aa).

5 WD repeats span residues 5–44 (DVGS…KEQA), 104–142 (AHDS…CVRE), 145–184 (QHFD…PEPF), 189–228 (DQDD…GDCV), and 233–282 (GHPL…VVAD). The tract at residues 328 to 415 (GALGVTNENE…DVENAFFDEL (88 aa)) is disordered. A compositionally biased stretch (acidic residues) spans 337-346 (EQSDEDEEMD). A compositionally biased stretch (low complexity) spans 358–367 (DGSGSSSSGE). Over residues 390 to 405 (EQKPLDVDKPKGRNEI) the composition is skewed to basic and acidic residues.

It belongs to the WD repeat WDR55 family.

It is found in the nucleus. Its subcellular location is the nucleolus. This Laccaria bicolor (strain S238N-H82 / ATCC MYA-4686) (Bicoloured deceiver) protein is WD repeat-containing protein JIP5 (JIP5).